A 152-amino-acid chain; its full sequence is MTTKKFRMEDVGLSKLKVEKNPKDVKQTEWKSVLPNEVYRVARESGTETPHTGGFNDHFEKGRYVCLCCGSELFNSDAKFWAGCGWPAFSESVGQDANIVRIVDRSHGMHRTEVRCKTCDAHLGHVFNDGPKETTGERYCINSVCMAFEKKD.

In terms of domain architecture, MsrB spans 27 to 151 (QTEWKSVLPN…NSVCMAFEKK (125 aa)). Positions 66, 69, 116, and 119 each coordinate Zn(2+). The active-site Nucleophile is the C140.

This sequence belongs to the MsrB Met sulfoxide reductase family. Requires Zn(2+) as cofactor.

It catalyses the reaction L-methionyl-[protein] + [thioredoxin]-disulfide + H2O = L-methionyl-(R)-S-oxide-[protein] + [thioredoxin]-dithiol. Its function is as follows. Methionine-sulfoxide reductase that specifically reduces methionine (R)-sulfoxide back to methionine. While in many cases, methionine oxidation is the result of random oxidation following oxidative stress, methionine oxidation is also a post-translational modification that takes place on specific residue. This Caenorhabditis elegans protein is Probable methionine-R-sulfoxide reductase B.